The sequence spans 95 residues: Co-chaperonin GroES (95 aa).

This sequence belongs to the GroES chaperonin family. In terms of assembly, heptamer of 7 subunits arranged in a ring. Interacts with the chaperonin GroEL.

Its subcellular location is the cytoplasm. Together with the chaperonin GroEL, plays an essential role in assisting protein folding. The GroEL-GroES system forms a nano-cage that allows encapsulation of the non-native substrate proteins and provides a physical environment optimized to promote and accelerate protein folding. GroES binds to the apical surface of the GroEL ring, thereby capping the opening of the GroEL channel. This chain is Co-chaperonin GroES, found in Maricaulis maris (strain MCS10) (Caulobacter maris).